We begin with the raw amino-acid sequence, 538 residues long: Putative cysteine ligase BshC (538 aa).

Residues lysine 460 to leucine 484 adopt a coiled-coil conformation.

This sequence belongs to the BshC family.

In terms of biological role, involved in bacillithiol (BSH) biosynthesis. May catalyze the last step of the pathway, the addition of cysteine to glucosamine malate (GlcN-Mal) to generate BSH. The chain is Putative cysteine ligase BshC from Bacillus cereus (strain ZK / E33L).